A 120-amino-acid chain; its full sequence is Large-conductance mechanosensitive channel (120 aa).

Transmembrane regions (helical) follow at residues 7 to 27 and 64 to 84; these read EFAL…GAAF and GLFI…FIFV.

The protein belongs to the MscL family. As to quaternary structure, homopentamer.

The protein localises to the cell membrane. Channel that opens in response to stretch forces in the membrane lipid bilayer. May participate in the regulation of osmotic pressure changes within the cell. This chain is Large-conductance mechanosensitive channel, found in Staphylococcus aureus (strain Mu3 / ATCC 700698).